Here is a 96-residue protein sequence, read N- to C-terminus: Aspartyl/glutamyl-tRNA(Asn/Gln) amidotransferase subunit C (96 aa).

It belongs to the GatC family. Heterotrimer of A, B and C subunits.

The catalysed reaction is L-glutamyl-tRNA(Gln) + L-glutamine + ATP + H2O = L-glutaminyl-tRNA(Gln) + L-glutamate + ADP + phosphate + H(+). The enzyme catalyses L-aspartyl-tRNA(Asn) + L-glutamine + ATP + H2O = L-asparaginyl-tRNA(Asn) + L-glutamate + ADP + phosphate + 2 H(+). Its function is as follows. Allows the formation of correctly charged Asn-tRNA(Asn) or Gln-tRNA(Gln) through the transamidation of misacylated Asp-tRNA(Asn) or Glu-tRNA(Gln) in organisms which lack either or both of asparaginyl-tRNA or glutaminyl-tRNA synthetases. The reaction takes place in the presence of glutamine and ATP through an activated phospho-Asp-tRNA(Asn) or phospho-Glu-tRNA(Gln). This is Aspartyl/glutamyl-tRNA(Asn/Gln) amidotransferase subunit C from Sulfurovum sp. (strain NBC37-1).